The chain runs to 422 residues: Glutamyl-tRNA reductase (422 aa).

Substrate is bound by residues 48–51 (TCNR), S100, 105–107 (EDQ), and Q111. C49 functions as the Nucleophile in the catalytic mechanism. 180 to 185 (GTGEMG) is a binding site for NADP(+).

This sequence belongs to the glutamyl-tRNA reductase family. As to quaternary structure, homodimer.

The catalysed reaction is (S)-4-amino-5-oxopentanoate + tRNA(Glu) + NADP(+) = L-glutamyl-tRNA(Glu) + NADPH + H(+). Its pathway is porphyrin-containing compound metabolism; protoporphyrin-IX biosynthesis; 5-aminolevulinate from L-glutamyl-tRNA(Glu): step 1/2. Catalyzes the NADPH-dependent reduction of glutamyl-tRNA(Glu) to glutamate 1-semialdehyde (GSA). This chain is Glutamyl-tRNA reductase, found in Methanococcoides burtonii (strain DSM 6242 / NBRC 107633 / OCM 468 / ACE-M).